The sequence spans 227 residues: uncharacterized protein (227 aa).

The region spanning 2–115 (KILMIEDNVS…TLVARIKAVI (114 aa)) is the Response regulatory domain. D51 is subject to 4-aspartylphosphate. The ompR/PhoB-type DNA-binding region spans 128–226 (EDMIETECFT…VWGVGYKFDE (99 aa)).

In terms of processing, phosphorylated by YclK.

The protein localises to the cytoplasm. Could be member of the two-component regulatory system YclK/YclJ. This is an uncharacterized protein from Bacillus subtilis (strain 168).